Reading from the N-terminus, the 225-residue chain is Suppressor of cytokine signaling 3 (225 aa).

The interval 22–33 (LKTFSSKSEYQL) is kinase inhibitory region (KIR). The extended SH2 subdomain (ESS) stretch occupies residues 34-45 (VVNAVRKLQESG). One can recognise an SH2 domain in the interval 46–142 (FYWSAVTGGE…TPSFSLPPTE (97 aa)). Positions 131–160 (PGTPSFSLPPTEPSSEVPEQPPAQALPGST) are disordered. The region spanning 177-224 (VLSRPLSSNVATLQHLCRKTVNGHLDSYEKVTQLPGPIREFLDQYDAP) is the SOCS box domain.

As to quaternary structure, interacts with multiple activated proteins of the tyrosine kinase signaling pathway including IGF1 receptor, insulin receptor and JAK2. Binding to JAK2 is mediated through the KIR and SH2 domains to a phosphorylated tyrosine residue within the JAK2 JH1 domain. Binds specific activated tyrosine residues of the leptin, EPO, IL12, GSCF and gp130 receptors. Interaction with CSNK1E stabilizes SOCS3 protein. Component of the probable ECS(SOCS3) E3 ubiquitin-protein ligase complex which contains CUL5, RNF7/RBX2, elongin BC complex and SOCS3. Interacts with CUL5, RNF7, ELOB and ELOC. Interacts with FGFR3. Interacts with INSR. Interacts with BCL10; this interaction may interfere with BCL10-binding with PELI2. Interacts with NOD2 (via CARD domain); the interaction promotes NOD2 degradation. Post-translationally, phosphorylated on tyrosine residues after stimulation by the cytokines, IL-2, EPO or IGF1. Low expression in lung, spleen and thymus. Expressed in Th2 but not TH1 cells.

It functions in the pathway protein modification; protein ubiquitination. SOCS family proteins form part of a classical negative feedback system that regulates cytokine signal transduction. SOCS3 is involved in negative regulation of cytokines that signal through the JAK/STAT pathway. Inhibits cytokine signal transduction by binding to tyrosine kinase receptors including IL6ST/gp130, LIF, erythropoietin, insulin, IL12, GCSF and leptin receptors. Binding to JAK2 inhibits its kinase activity and regulates IL6 signaling. Suppresses fetal liver erythropoiesis. Regulates onset and maintenance of allergic responses mediated by T-helper type 2 cells. Probable substrate recognition component of a SCF-like ECS (Elongin BC-CUL2/5-SOCS-box protein) E3 ubiquitin-protein ligase complex which mediates the ubiquitination and subsequent proteasomal degradation of target proteins. This chain is Suppressor of cytokine signaling 3, found in Mus musculus (Mouse).